Consider the following 172-residue polypeptide: Ribosome maturation factor RimM (172 aa).

A PRC barrel domain is found at 96-168 (DGEFYYHEII…RVDVEIPEGL (73 aa)).

The protein belongs to the RimM family. In terms of assembly, binds ribosomal protein uS19.

The protein localises to the cytoplasm. Functionally, an accessory protein needed during the final step in the assembly of 30S ribosomal subunit, possibly for assembly of the head region. Essential for efficient processing of 16S rRNA. May be needed both before and after RbfA during the maturation of 16S rRNA. It has affinity for free ribosomal 30S subunits but not for 70S ribosomes. The polypeptide is Ribosome maturation factor RimM (Streptococcus sanguinis (strain SK36)).